We begin with the raw amino-acid sequence, 154 residues long: Small ribosomal subunit protein bS16 (154 aa).

The tract at residues 82 to 154 (VQERAARSNP…EAAAEESTEA (73 aa)) is disordered. Basic and acidic residues predominate over residues 92–109 (KKAEPGEKAKERAEERAA). The span at 110-129 (KLAAAEEAANAPAEEPAAEP) shows a compositional bias: low complexity. Positions 142 to 154 (PAEEAAAEESTEA) are enriched in acidic residues.

Belongs to the bacterial ribosomal protein bS16 family.

This Rhizorhabdus wittichii (strain DSM 6014 / CCUG 31198 / JCM 15750 / NBRC 105917 / EY 4224 / RW1) (Sphingomonas wittichii) protein is Small ribosomal subunit protein bS16.